The chain runs to 2410 residues: MTLSNGSNGANGTSNGNGAHPSANGFHNAANGGANNGSANGGAEHDAGRPQVDGDISSAIAVIGVSGRFPGDATSPRHLWDLLKEGRNALSDVPESRFNIDGFYHPDGGRAGTLNTKQGYFLKSDVDKFDAGFFSITPEEARGMDPTQRILLELAYEGLENAGLKIDEVANQHMSCYIGACQHDYWDLQAYDMDSAPKYTATGTGPALLSNRISWFFNLKGPSVTIDTACSSTLTALHLAGQSIRNGESDSALVGGLGLHLLPNFGVFMSSMSFLSADNKCHSFDASANGYARAEGGGFVVLKRLDKALADGDTIRAVLRSTGSNQDGRTLGITQPSASRQEELIRATYASAGLSFDKTNLFEAHGTGTKVGDPIECSVIGNVFGKTREKPVYVGSVKSNIGHLEGASGLAGLVKTIYSLESGVISPTYGLEHVNPKIKLDEWKINIPTEEIKWPAGLRRASINSFGYGGANAHAVLDDAYHFLKTHNLKGHHNTKVEGVLNTGLIANGSQDVIEGTDKKSHLFLLSSHEESGIARLSQTLQAYLAETSARKLPEDQFLHRLAYTLSEKRSALPWKTYAAASTIEELQQALDGAPAKAARVPRSQALTFIFTGQGAQWFAMGRELQKYPVFQQSLHACSQYLKDFGSTWDLVEELNRDAKESIIDLPYVSQPSCTALQLSIIDLLASWGIHPQVTVGHSSGEIAAAYAKGAFDKEAAMRIAYFRGHLTGNITKTGSMAAVGLGPDRVSEYMSRVTAGKIVIACINSPASVTLSGDVEGIDEVLTFLQADDIFARKLRVTTAYHSHHMQQISEEYLNSLSGKWELKPGNPKVRMFSSVSAKAIDGTELGPAYWVANLVSPVNFSGAVTAAANAGALGKRKTSGKKGSADAMVEIGPHAALQGPLKQILDSIGDKGASPKYFSAIKRKQDAIQTTLEVVGELLVLGHQVNIPLANTYTETTSALVDLPPYAWNTANSYWHESAAVTAYKQRKHPRLELLGVRDPRSTKAEPAWHNYLRISEQPWIEHHQFQNTNIYPMAGMIVMAIEGLRQVETRADVEGYTIRDVNIGSALVVPPDQTVETRLQLTPWRSGPNVSWSHWTEFTVSSRNESGSWTTNCTGLVSTSYKHDTNSTFLDEEAAANALLNQEYKDISKSDLPSVDPTVFYTKLDESGFSLGPAFRGVKELNLFDHKAHFSMEVIDTKEFYPKKWEPAHLIHPAVLDVFVHLLISSTGDAAEIKARVPVSTASLYISADFDSTGGTKYHGFSTSKKHGATNMLSDVIAFAEGGSKALIALKGCKTVPLRGASDSSSGDGQPLGHVPVVPKKVVDVEISDAATLGQLLTGTDLASKLASYLSLLGQKRPGLRVLEYSSSTSSTLLKALTAQAEDLQGSLSSVALTTPLDGPADELTSVPETWKNKVRQEKLDLAQDPSTQGFEDVALDVIILDVEDQQGDISLVLKNAKKVLKPSGILLIANHTAAISTDLLTSTGFTSTTVSDLIIARHKPETEPPVRRVLVVTPSTTSPGLGRLITQAESDLTSRGYEVAKTDFGSIPEQATPFLTLSALDIDAPFLEGFHHETFAKLRSLFLASRGTLWLTLDTASRGLVNGLGRTIRAEHPDISFTTLGLDASAALDSASNTKTISSIIDNISRKTFGETSDSEYVIRDNQVLIERLIPNPGLKALLDSSKTGNKLSAVKIPLKQVAKPLQLSIRDHGLLDTLEYLSVPDLPEPLGDNQIEIEVGSVGLNFRDVMVAMGQMEDSTLGIECAGVVVKVGAGVQKFKVGDRVFGMHAGCFQTRVRVDPRTFQRTPDNLGDEEAASLMCTSATVVHSLIDVARLQRGESVLIHSAAGGVGQTAIRLAKHLGAEIFATVSSEKKKRLLVEEYGIKESHIFNSRDYSFADGILRLTNQRGVDVVINSLAGEALRRTWLCVAPFGRFIELGKRDIYDNSGLDMRPFLDNITFSGLDILTQVISYPDRFEAIGNQVVELLSKNAISPLNNLARYSFGEVSKAFRLMQSGGHVGKIVLYPRPDDIVPVVPDGLESFCLPHDATYVLIGGLGGIGRSVTRLLVQRGARHLVFLSRSAASRPEAQALLDEVHAQGVQAKAFAVDVAEKSQLEPVINDVKQSFPAIKGLIHCAMDLRDAVYSNMTADDWNASLRPKLLATRNLHDLLPTDLDFFICLSSIAGIIGSRGQANYNAGNTYQDALAHQRAASGLAATSINLSLVVGIGVSTERSEVFQLLKDGGLLGMDENDVLNIIKAAISGRTPTQVALGASTGGQLDKLAANDPYWFADSRFAVLNQLDRQGTGAVAGGQDWKKLIAAAASPDEVYEIVLQQLLEGVSKIIKADVEDMDSRRSLPALGIDSLVAIEIRTWLLKEFQADLSVFDIVSNDPLTGFTKKVMAKSALIA.

Residues 1–42 (MTLSNGSNGANGTSNGNGAHPSANGFHNAANGGANNGSANGG) are compositionally biased toward low complexity. The tract at residues 1 to 52 (MTLSNGSNGANGTSNGNGAHPSANGFHNAANGGANNGSANGGAEHDAGRPQV) is disordered. The Ketosynthase family 3 (KS3) domain occupies 57 to 479 (SSAIAVIGVS…GANAHAVLDD (423 aa)). Catalysis depends on for beta-ketoacyl synthase activity residues C230, H365, and H403. A malonyl-CoA:ACP transacylase (MAT) domain region spans residues 608-929 (TFIFTGQGAQ…FSAIKRKQDA (322 aa)). The active-site For malonyltransferase activity is S699. The interval 994-1127 (LELLGVRDPR…GLVSTSYKHD (134 aa)) is N-terminal hotdog fold. The 314-residue stretch at 994 to 1307 (LELLGVRDPR…TVPLRGASDS (314 aa)) folds into the PKS/mFAS DH domain. A dehydratase (DH) domain region spans residues 995–1302 (ELLGVRDPRS…LKGCKTVPLR (308 aa)). H1026 (proton acceptor; for dehydratase activity) is an active-site residue. The interval 1155–1307 (LPSVDPTVFY…TVPLRGASDS (153 aa)) is C-terminal hotdog fold. D1220 (proton donor; for dehydratase activity) is an active-site residue. Residues 1714 to 2026 (GLLDTLEYLS…SGGHVGKIVL (313 aa)) are enoyl reductase (ER) domain. Residues 2050–2226 (ATYVLIGGLG…AATSINLSLV (177 aa)) form a ketoreductase (KR) domain region. Residues 2329 to 2406 (EVYEIVLQQL…GFTKKVMAKS (78 aa)) enclose the Carrier domain. Residue S2366 is modified to O-(pantetheine 4'-phosphoryl)serine.

Its pathway is mycotoxin biosynthesis. Functionally, reducing polyketide synthase; part of the gene cluster that mediates the biosynthesis of fusaric acid, a mycotoxin with low to moderate toxicity to animals and humans, but with high phytotoxic properties. L-aspartate is suggested as fusaric acid amino acid precursor that is activated and further processed to O-acetyl-L-homoserine by cluster enzymes aspartate kinase FUB3 and homoserine O-acetyltransferase FUB5, as well as enzymes of the primary metabolism. The polyketide synthase (PKS) FUB1 generates the triketide trans-2-hexenal which is presumptively released by the hydrolase FUB4 and linked to the NRPS-bound amino acid precursor by NAD(P)-dependent dehydrogenase FUB6. FUB1, FUB4, and the non-canonical NRPS Fub8 may form an enzyme complex. Further processing of the NRPS-bound intermediate might be carried out by FUB6 and the sulfhydrylase FUB7, enabling a spontaneous electrocyclization to close the carbon backbone of fusaric acid. Dihydrofusaric acid is likely to be released via reduction by the thioester reductase (TR) domain of FUB8 whereupon the final oxidation to fusaric acid may (also) be performed by the FMN-dependent dehydrogenase FUB9. This chain is Reducing polyketide synthase FUB1, found in Gibberella fujikuroi (strain CBS 195.34 / IMI 58289 / NRRL A-6831) (Bakanae and foot rot disease fungus).